The sequence spans 346 residues: Annexin A1 (346 aa).

Position 2 is an N-acetylalanine (A2). S5 carries the post-translational modification Phosphoserine; by TRPM7. Q19 is covalently cross-linked (Isoglutamyl lysine isopeptide (Gln-Lys) (interchain with K-?)). Residue Y21 is modified to Phosphotyrosine; by EGFR. Residue S27 is modified to Phosphoserine; by PKC. A phosphoserine mark is found at S34 and S37. Annexin repeat units follow at residues 42-113 (FNPS…AMLK), 114-185 (TPAQ…ALAK), 197-269 (DLAD…TIVK), and 273-344 (STPA…ALCG). K58 carries the N6-acetyllysine modification. Ca(2+) is bound by residues G59, V60, E62, K97, L100, E105, M127, G129, G131, T132, and E134. Position 136 is a phosphothreonine (T136). D171, G210, and R213 together coordinate Ca(2+). K214 is covalently cross-linked (Glycyl lysine isopeptide (Lys-Gly) (interchain with G-Cter in SUMO1); alternate). Residue K214 forms a Glycyl lysine isopeptide (Lys-Gly) (interchain with G-Cter in SUMO2); alternate linkage. Positions 215, 253, 255, and 256 each coordinate Ca(2+). Residue K257 forms a Glycyl lysine isopeptide (Lys-Gly) (interchain with G-Cter in SUMO1) linkage. Ca(2+)-binding residues include E261, M286, G288, and G290. K312 is subject to N6-acetyllysine. A disulfide bridge links C324 with C343. Positions 328, 330, and 331 each coordinate Ca(2+). A Glycyl lysine isopeptide (Lys-Gly) (interchain with G-Cter in SUMO1) cross-link involves residue K332. E336 provides a ligand contact to Ca(2+).

The protein belongs to the annexin family. Homodimer; non-covalently linked. Homodimer; linked by transglutamylation. Homodimers linked by transglutamylation are observed in placenta, but not in other tissues. Interacts with S100A11. Heterotetramer, formed by two molecules each of S100A11 and ANXA1. Interacts with DYSF. Interacts with EGFR. Phosphorylated by protein kinase C, EGFR and TRPM7. Phosphorylated in response to EGF treatment. Post-translationally, sumoylated. In terms of processing, proteolytically cleaved by cathepsin CTSG to release the active N-terminal peptide Ac2-26. Detected in eosinophils. Detected in lung, placenta, spleen and thymus (at protein level).

It is found in the nucleus. It localises to the cytoplasm. The protein resides in the cell projection. The protein localises to the cilium. Its subcellular location is the basolateral cell membrane. It is found in the lateral cell membrane. It localises to the cell membrane. The protein resides in the apical cell membrane. The protein localises to the membrane. Its subcellular location is the endosome membrane. It is found in the secreted. It localises to the extracellular space. The protein resides in the early endosome. The protein localises to the cytoplasmic vesicle membrane. Its subcellular location is the extracellular exosome. It is found in the cytoplasmic vesicle. It localises to the secretory vesicle lumen. The protein resides in the phagocytic cup. Plays important roles in the innate immune response as effector of glucocorticoid-mediated responses and regulator of the inflammatory process. Has anti-inflammatory activity. Plays a role in glucocorticoid-mediated down-regulation of the early phase of the inflammatory response. Contributes to the adaptive immune response by enhancing signaling cascades that are triggered by T-cell activation, regulates differentiation and proliferation of activated T-cells. Promotes the differentiation of T-cells into Th1 cells and negatively regulates differentiation into Th2 cells. Has no effect on unstimulated T-cells. Negatively regulates hormone exocytosis via activation of the formyl peptide receptors and reorganization of the actin cytoskeleton. Has high affinity for Ca(2+) and can bind up to eight Ca(2+) ions. Displays Ca(2+)-dependent binding to phospholipid membranes. Plays a role in the formation of phagocytic cups and phagosomes. Plays a role in phagocytosis by mediating the Ca(2+)-dependent interaction between phagosomes and the actin cytoskeleton. Its function is as follows. Functions at least in part by activating the formyl peptide receptors and downstream signaling cascades. Promotes chemotaxis of granulocytes and monocytes via activation of the formyl peptide receptors. Promotes rearrangement of the actin cytoskeleton, cell polarization and cell migration. Promotes resolution of inflammation and wound healing. Acts via neutrophil N-formyl peptide receptors to enhance the release of CXCL2. The chain is Annexin A1 (Anxa1) from Rattus norvegicus (Rat).